The chain runs to 159 residues: Ribosomal RNA large subunit methyltransferase H (159 aa).

S-adenosyl-L-methionine is bound by residues Leu76, Gly107, and 126-131 (LSSLTL).

It belongs to the RNA methyltransferase RlmH family. Homodimer.

It is found in the cytoplasm. The enzyme catalyses pseudouridine(1915) in 23S rRNA + S-adenosyl-L-methionine = N(3)-methylpseudouridine(1915) in 23S rRNA + S-adenosyl-L-homocysteine + H(+). In terms of biological role, specifically methylates the pseudouridine at position 1915 (m3Psi1915) in 23S rRNA. The protein is Ribosomal RNA large subunit methyltransferase H of Cupriavidus necator (strain ATCC 17699 / DSM 428 / KCTC 22496 / NCIMB 10442 / H16 / Stanier 337) (Ralstonia eutropha).